A 262-amino-acid polypeptide reads, in one-letter code: Snake venom serine protease (262 aa).

The N-terminal stretch at 1 to 18 (MVLIRVLANLLILQLSYA) is a signal peptide. Residues 19 to 24 (QKSSEL) constitute a propeptide that is removed on maturation. Residues 25 to 253 (VIGGDECNIN…YTEWIQSIIA (229 aa)) enclose the Peptidase S1 domain. 6 disulfide bridges follow: Cys-31–Cys-167, Cys-50–Cys-66, Cys-102–Cys-260, Cys-146–Cys-214, Cys-178–Cys-193, and Cys-204–Cys-229. Active-site charge relay system residues include His-65 and Asp-114. Residues Asn-125 and Asn-158 are each glycosylated (N-linked (GlcNAc...) asparagine). Ser-208 functions as the Charge relay system in the catalytic mechanism.

This sequence belongs to the peptidase S1 family. Snake venom subfamily. In terms of assembly, monomer. In terms of tissue distribution, expressed by the venom gland.

Its subcellular location is the secreted. Functionally, snake venom serine protease that may act in the hemostasis system of the prey. The sequence is that of Snake venom serine protease from Crotalus durissus durissus (Central American rattlesnake).